Reading from the N-terminus, the 1004-residue chain is Centriolar coiled-coil protein of 110 kDa (1004 aa).

The interval 1 to 221 (MEEYEEFCEK…SCLAEVTPDP (221 aa)) is CEP97 binding. The stretch at 51–90 (EKRKKIQEEKQKALDVQSRKQANRKKALLTRVQEILENVQ) forms a coiled coil. The interval 64-82 (LDVQSRKQANRKKALLTRV) is calmodulin-binding. Positions 67-82 (QSRKQANRKKALLTRV) are required for interaction with CEP290. Disordered stretches follow at residues 147 to 194 (PVNN…SSAS) and 239 to 279 (RELS…APPM). A Phosphoserine modification is found at Ser-170. Low complexity predominate over residues 243-252 (SRSLRNSLKR). A compositionally biased stretch (basic and acidic residues) spans 253–276 (SVNETHSDRENDAAKASDCVKEKA). Residues 349–564 (ENKVKSLKGP…QTQTSRQQMD (216 aa)) form an interaction with CEP76 region. 3 positions are modified to phosphoserine: Ser-364, Ser-370, and Ser-398. The tract at residues 401–433 (GKEEAVDRTAPAAAETTNESETVPKSPTDLTGV) is disordered. The segment covering 415–433 (ETTNESETVPKSPTDLTGV) has biased composition (polar residues). Position 550 is a phosphoserine (Ser-550). Positions 641–699 (QELLKSKMLAFEEMRKRLEEQHAQQLSLLIAEQEREQEQLQKEIEEQEKMLKEKAVTTD) form a coiled coil. 2 calmodulin-binding regions span residues 773–813 (GRAQ…DKLK) and 901–916 (VALS…RKKF). A disordered region spans residues 955–1004 (LSRQGTPKTSVKGVVQNRQKPSQSRVPNRAPVSGAYAGKTQRKRPNVATI). Over residues 970 to 980 (QNRQKPSQSRV) the composition is skewed to polar residues. A compositionally biased stretch (basic residues) spans 994-1004 (TQRKRPNVATI).

As to quaternary structure, interacts with CALM1, CETN2, CEP76, CEP104, CEP290 and TALPID3. Interacts with CEP97. Seems to associate with discrete CETN2, CEP97 and CEP290-containing complexes. Interacts with NEURL4 and CCNF; these interactions are not mutually exclusive and both lead to CCP110 ubiquitination and proteasome-dependent degradation. Via its interaction with NEURL4, may indirectly interact with HERC2. Interacts with KIF24, leading to its recruitment to centrioles. Interacts with USP20 and USP33. Interacts with MPHOSPH9. Interacts (via N-terminal region) with ENKD1 (via central region); ENKD1 competes with CEP97 for binding to CCP110, destabilizing the interaction between CP110 and CEP97 which promotes the removal of CCP110 and CEP97 from the mother centriole and allows the initiation of ciliogenesis. In terms of processing, phosphorylated by CDKs. Ubiquitinated by the SCF(CCNF) during G2 phase, leading to its degradation by the proteasome and preventing centrosome reduplication. Deubiquitinated by USP33 in S and G2/M phase, leading to stabilize CCP110 during the period which centrioles duplicate and elongate. Ubiquitinated by the EDVP complex, leading to its degradation.

The protein localises to the cytoplasm. Its subcellular location is the cytoskeleton. It localises to the microtubule organizing center. It is found in the centrosome. The protein resides in the centriole. The protein localises to the cilium basal body. Necessary for centrosome duplication at different stages of procentriole formation. Acts as a key negative regulator of ciliogenesis in collaboration with CEP97 by capping the mother centriole thereby preventing cilia formation. Also involved in promoting ciliogenesis. May play a role in the assembly of the mother centriole subdistal appendages (SDA) thereby effecting the fusion of recycling endosomes to basal bodies during cilia formation. Required for correct spindle formation and has a role in regulating cytokinesis and genome stability via cooperation with CALM1 and CETN2. In Mus musculus (Mouse), this protein is Centriolar coiled-coil protein of 110 kDa (Ccp110).